Consider the following 511-residue polypeptide: Cytochrome P450 monooxygenase roqR (511 aa).

An N-terminal signal peptide occupies residues 1–23 (MSGYVLLTVQLAAVLLLVTLWRA). Residues N364, N373, and N383 are each glycosylated (N-linked (GlcNAc...) asparagine). A heme-binding site is contributed by C455.

The protein belongs to the cytochrome P450 family. Heme serves as cofactor.

The protein operates within alkaloid biosynthesis. Cytochrome P450 monooxygenase; part of the gene cluster that mediates the biosynthesis of the mycotoxins roquefortine C and meleagrin. The first stage is catalyzed by the dipeptide synthase roqA which condenses histidine and tryptophan to produce histidyltryptophanyldiketopiperazine (HTD). HTD is then converted to roquefortine C through two possible pathways. In the first pathway, prenyltransferase roqD transforms HTD to the intermediate roquefortine D, which is in turn converted to roquefortine C by the cytochrome P450 monooxygenase roqR. In the second pathway, HTD is first converted to the intermediate dehydrohistidyltryptophanyldi-ketopiperazine (DHTD) by roqR which is then prenylated by roqD to form roquefortine C. Roquefortine C can be further transformed to meleagrin via three more reactions including oxydation to glandicolin A by roqM, which is further reduced to glandicoline B by roqO. Finally, glandicoline B is converted to meleagrin by the glandicoline B O-methyltransferase roqN. More studies identified further branching and additional metabolites produced by the roquefortine/meleagrin cluster, including roquefortine F, roquefortine L, roquefortine M, roquefortine N and neoxaline. The polypeptide is Cytochrome P450 monooxygenase roqR (Penicillium rubens (strain ATCC 28089 / DSM 1075 / NRRL 1951 / Wisconsin 54-1255) (Penicillium chrysogenum)).